Reading from the N-terminus, the 213-residue chain is Probable nicotinate-nucleotide adenylyltransferase (213 aa).

Belongs to the NadD family.

The catalysed reaction is nicotinate beta-D-ribonucleotide + ATP + H(+) = deamido-NAD(+) + diphosphate. It participates in cofactor biosynthesis; NAD(+) biosynthesis; deamido-NAD(+) from nicotinate D-ribonucleotide: step 1/1. Functionally, catalyzes the reversible adenylation of nicotinate mononucleotide (NaMN) to nicotinic acid adenine dinucleotide (NaAD). In Escherichia coli O17:K52:H18 (strain UMN026 / ExPEC), this protein is Probable nicotinate-nucleotide adenylyltransferase.